Here is a 180-residue protein sequence, read N- to C-terminus: 5'(3')-deoxyribonucleotidase (180 aa).

Aspartate 9 serves as the catalytic Nucleophile. The Mg(2+) site is built by aspartate 9, aspartate 11, and aspartate 134. Aspartate 11 serves as the catalytic Proton donor.

The protein belongs to the 5'(3')-deoxyribonucleotidase family. The cofactor is Mg(2+).

Dephosphorylates nucleoside monophosphates such as the 5' and 2'(3')-phosphates of deoxyribonucleotides in vitro. The chain is 5'(3')-deoxyribonucleotidase from Clostridium acetobutylicum (strain ATCC 824 / DSM 792 / JCM 1419 / IAM 19013 / LMG 5710 / NBRC 13948 / NRRL B-527 / VKM B-1787 / 2291 / W).